Here is a 399-residue protein sequence, read N- to C-terminus: Guanine nucleotide-binding protein negative regulator 1 (399 aa).

WD repeat units follow at residues 44–83 (KPLN…LSKK), 105–145 (YSYS…NKAS), 150–194 (DHQE…VMTT), 207–247 (SLKG…PCQL), 252–292 (ERGN…DMVY), and 296–337 (GHRG…EETH).

As to quaternary structure, interacts with gpa1.

Its subcellular location is the cytoplasm. In terms of biological role, negatively regulates the pheromone-response pathway. Acts as a structural mimic of the G protein beta subunit thereby interacting with gpa1 which then inhibits gpa1 signaling. This is Guanine nucleotide-binding protein negative regulator 1 (gnr1) from Schizosaccharomyces pombe (strain 972 / ATCC 24843) (Fission yeast).